The following is a 328-amino-acid chain: 4-hydroxythreonine-4-phosphate dehydrogenase (328 aa).

Substrate-binding residues include H135 and T136. Positions 165, 210, and 265 each coordinate a divalent metal cation. Substrate contacts are provided by K273, N282, and R291.

It belongs to the PdxA family. In terms of assembly, homodimer. Zn(2+) is required as a cofactor. Mg(2+) serves as cofactor. It depends on Co(2+) as a cofactor.

The protein localises to the cytoplasm. The catalysed reaction is 4-(phosphooxy)-L-threonine + NAD(+) = 3-amino-2-oxopropyl phosphate + CO2 + NADH. It participates in cofactor biosynthesis; pyridoxine 5'-phosphate biosynthesis; pyridoxine 5'-phosphate from D-erythrose 4-phosphate: step 4/5. Functionally, catalyzes the NAD(P)-dependent oxidation of 4-(phosphooxy)-L-threonine (HTP) into 2-amino-3-oxo-4-(phosphooxy)butyric acid which spontaneously decarboxylates to form 3-amino-2-oxopropyl phosphate (AHAP). The chain is 4-hydroxythreonine-4-phosphate dehydrogenase from Pseudomonas aeruginosa (strain ATCC 15692 / DSM 22644 / CIP 104116 / JCM 14847 / LMG 12228 / 1C / PRS 101 / PAO1).